Reading from the N-terminus, the 1430-residue chain is 3'-5' RNA helicase YTHDC2 (1430 aa).

The segment at 1 to 37 is disordered; it reads MSRPSSVSPRQPAPGGGGGGGPSPCGPGGGGRAKGLK. Residues 14 to 33 show a composition bias toward gly residues; it reads PGGGGGGGPSPCGPGGGGRA. The region spanning 38–106 is the R3H domain; sequence DIRIDEEVKI…NRYLTVKKKD (69 aa). The Helicase ATP-binding domain maps to 203-369; sequence VKIIKENKVV…FGSCPVIYIQ (167 aa). An ATP-binding site is contributed by 216 to 223; that stretch reads GETGSGKT. The short motif at 316-319 is the DEAH box element; it reads DEVH. ANK repeat units lie at residues 506 to 538 and 539 to 571; these read TSAT…SKAS and NGWM…FGNL. One can recognise a Helicase C-terminal domain in the interval 612 to 784; that stretch reads LLYNICHSCD…ELCLHTKLLA (173 aa). S1089, S1090, and S1092 each carry phosphoserine. Positions 1164–1174 are enriched in polar residues; sequence EQSAGLQQPSG. A disordered region spans residues 1164-1288; sequence EQSAGLQQPS…SPSPRPNMPV (125 aa). Residues 1191–1200 show a composition bias toward low complexity; it reads SSWRSNNSRK. A Phosphoserine modification is found at S1202. Positions 1231–1249 are enriched in basic and acidic residues; sequence KYKDRGILHPKRGTEDRSD. Residues 1250-1264 are compositionally biased toward low complexity; it reads QSSVKSTDSSSYPSP. Phosphoserine is present on residues S1263, S1267, and S1281. Residues 1288-1418 enclose the YTH domain; the sequence is VRYFIMKSSN…QVGEQLLQLW (131 aa). RNA is bound by residues 1294 to 1296, W1310, and W1360; that span reads KSS.

It belongs to the DEAD box helicase family. DEAH subfamily. Interacts with MEIOC; binds transcripts that regulate the mitotic cell cycle inhibiting progression into metaphase, thereby allowing meiotic prophase to proceed normally. Interacts (via ANK repeats) with XRN1. Interacts with ZCCHC4. Associates with the small ribosomal subunit. Interacts with RBM46.

It localises to the cytoplasm. The protein resides in the perinuclear region. It carries out the reaction ATP + H2O = ADP + phosphate + H(+). Functionally, 3'-5' RNA helicase that plays a key role in the male and female germline by promoting transition from mitotic to meiotic divisions in stem cells. Specifically recognizes and binds N6-methyladenosine (m6A)-containing RNAs, a modification present at internal sites of mRNAs and some non-coding RNAs that plays a role in the efficiency of RNA processing and stability. Essential for ensuring a successful progression of the meiotic program in the germline by regulating the level of m6A-containing RNAs. Acts by binding and promoting degradation of m6A-containing mRNAs: the 3'-5' RNA helicase activity is required for this process and RNA degradation may be mediated by XRN1 exoribonuclease. Required for both spermatogenesis and oogenesis. This chain is 3'-5' RNA helicase YTHDC2, found in Pongo abelii (Sumatran orangutan).